Consider the following 43-residue polypeptide: Protein PsbN (43 aa).

A helical transmembrane segment spans residues 7-29; the sequence is VTIFLSGLLVSFTGYALYTAFGQ.

This sequence belongs to the PsbN family.

It is found in the plastid. Its subcellular location is the chloroplast thylakoid membrane. Functionally, may play a role in photosystem I and II biogenesis. The chain is Protein PsbN from Ipomoea purpurea (Common morning glory).